The sequence spans 592 residues: Delta-like protein 3 (592 aa).

An N-terminal signal peptide occupies residues 1 to 32; it reads MVSLQVSPLSQTLILAFLLPQALPAGVFELQI. The Extracellular segment spans residues 33–490; sequence HSFGPGPGLG…LRQADPQRFL (458 aa). The DSL domain occupies 174–213; sequence ARCEPPAVGAACARLCRSRSAPSRCGPGLRPCTPFPDECE. EGF-like domains are found at residues 214–247, 272–308, 310–349, 351–387, 389–425, and 427–463; these read APSV…PLCT, GPGP…LRCE, SGVT…SNCE, RVDR…PRCE, DLDD…RDCR, and RADP…VRCE. 18 cysteine pairs are disulfide-bonded: cysteine 218/cysteine 229, cysteine 222/cysteine 235, cysteine 237/cysteine 246, cysteine 276/cysteine 287, cysteine 281/cysteine 296, cysteine 298/cysteine 307, cysteine 314/cysteine 325, cysteine 319/cysteine 337, cysteine 339/cysteine 348, cysteine 355/cysteine 366, cysteine 360/cysteine 375, cysteine 377/cysteine 386, cysteine 393/cysteine 404, cysteine 398/cysteine 413, cysteine 415/cysteine 424, cysteine 431/cysteine 442, cysteine 436/cysteine 451, and cysteine 453/cysteine 462. Residues 491 to 511 form a helical membrane-spanning segment; that stretch reads LPPALGLLVAAGLAGAALLVI. At 512–592 the chain is on the cytoplasmic side; the sequence is HVRRRGPGQD…REDWLIQVLF (81 aa). A disordered region spans residues 548–567; the sequence is QDGAGDGPSSSADWNHPEDG.

Can bind and activate Notch-1 or another Notch receptor. Ubiquitinated by MIB (MIB1 or MIB2), leading to its endocytosis and subsequent degradation. In terms of tissue distribution, predominantly expressed in the neuroectoderm and paraxial mesoderm during embryogenesis.

The protein resides in the membrane. Functionally, inhibits primary neurogenesis. May be required to divert neurons along a specific differentiation pathway. Plays a role in the formation of somite boundaries during segmentation of the paraxial mesoderm. The chain is Delta-like protein 3 (Dll3) from Mus musculus (Mouse).